We begin with the raw amino-acid sequence, 164 residues long: Peptide deformylase-like (164 aa).

Residue Glu133 is part of the active site.

It belongs to the polypeptide deformylase family.

The chain is Peptide deformylase-like from Agrobacterium fabrum (strain C58 / ATCC 33970) (Agrobacterium tumefaciens (strain C58)).